The chain runs to 616 residues: Chaperone protein HtpG (616 aa).

The a; substrate-binding stretch occupies residues Met1 to Arg333. The b stretch occupies residues Glu334–Lys542. A c region spans residues Ile543–Leu616.

Belongs to the heat shock protein 90 family. Homodimer.

Its subcellular location is the cytoplasm. In terms of biological role, molecular chaperone. Has ATPase activity. The polypeptide is Chaperone protein HtpG (Borreliella burgdorferi (strain ATCC 35210 / DSM 4680 / CIP 102532 / B31) (Borrelia burgdorferi)).